Here is a 634-residue protein sequence, read N- to C-terminus: Sodium-dependent multivitamin transporter (634 aa).

12 consecutive transmembrane segments (helical) span residues 23 to 43, 65 to 85, 100 to 120, 142 to 162, 175 to 195, 207 to 227, 255 to 275, 295 to 315, 350 to 370, 403 to 423, 427 to 447, and 455 to 475; these read FSVVDYVVFGLLLVLSLVIGL, MGCLPVALSLLATFQSAVAIL, FLGCSYFLGLLIPAHIFIPVF, ICGTVTFIFQMVVYMGVALYA, LWLSVLALGIVCNIYTALGGL, LIMFLGQLVVIIVGAAKVGGL, FWTLAFGGVFMMLSLYGVNQA, AVFPCQQVALCMSCLIGLVMF, LPGLFVACLFSGSLSTISSAF, FAYGLVCLGMAYVSSHLGSVL, LSIFGMVGGPLLGLFCLGMFF, and AIVGLLTGLTMAFWIGIGSIV. Asn-488 and Asn-497 each carry an N-linked (GlcNAc...) asparagine glycan. A helical transmembrane segment spans residues 526-546; the sequence is LWYSAHNSTTVIAVGLIVSLL.

The protein belongs to the sodium:solute symporter (SSF) (TC 2.A.21) family. As to quaternary structure, interacts with PDZD11. As to expression, expressed in the jejunum (at protein level). Expressed in lung, skeletal muscle, heart, brain, kidney, intestine, liver, and placenta.

It localises to the cell membrane. Its subcellular location is the apical cell membrane. It catalyses the reaction biotin(out) + 2 Na(+)(out) = biotin(in) + 2 Na(+)(in). The enzyme catalyses (R)-pantothenate(out) + 2 Na(+)(out) = (R)-pantothenate(in) + 2 Na(+)(in). It carries out the reaction (R)-lipoate(out) + 2 Na(+)(out) = (R)-lipoate(in) + 2 Na(+)(in). The catalysed reaction is iodide(out) + 2 Na(+)(out) = iodide(in) + 2 Na(+)(in). Its function is as follows. Sodium-dependent multivitamin transporter that mediates the electrogenic transport of pantothenate, biotin, lipoate and iodide. Functions as a Na(+)-coupled substrate symporter where the stoichiometry of Na(+):substrate is 2:1, creating an electrochemical Na(+) gradient used as driving force for substrate uptake. Required for biotin and pantothenate uptake in the intestine across the brush border membrane. Plays a role in the maintenance of intestinal mucosa integrity, by providing the gut mucosa with biotin. Contributes to the luminal uptake of biotin and pantothenate into the brain across the blood-brain barrier. In Rattus norvegicus (Rat), this protein is Sodium-dependent multivitamin transporter.